The chain runs to 137 residues: Large ribosomal subunit protein uL16 (137 aa).

This sequence belongs to the universal ribosomal protein uL16 family. Part of the 50S ribosomal subunit.

Its function is as follows. Binds 23S rRNA and is also seen to make contacts with the A and possibly P site tRNAs. This Wolbachia pipientis wMel protein is Large ribosomal subunit protein uL16.